Reading from the N-terminus, the 373-residue chain is Chaperone protein DnaJ (373 aa).

One can recognise a J domain in the interval 5–70 (DFYATLGVAR…EKRAMYDQYG (66 aa)). The segment at 134-212 (GVKKRINIPT…CRGAGRNKAV (79 aa)) adopts a CR-type zinc-finger fold. Cysteine 147, cysteine 150, cysteine 164, cysteine 167, cysteine 186, cysteine 189, cysteine 200, and cysteine 203 together coordinate Zn(2+). 4 CXXCXGXG motif repeats span residues 147-154 (CDVCNGSG), 164-171 (CPTCKGSG), 186-193 (CPTCHGAG), and 200-207 (CVKCRGAG).

This sequence belongs to the DnaJ family. As to quaternary structure, homodimer. Zn(2+) serves as cofactor.

It localises to the cytoplasm. Its function is as follows. Participates actively in the response to hyperosmotic and heat shock by preventing the aggregation of stress-denatured proteins and by disaggregating proteins, also in an autonomous, DnaK-independent fashion. Unfolded proteins bind initially to DnaJ; upon interaction with the DnaJ-bound protein, DnaK hydrolyzes its bound ATP, resulting in the formation of a stable complex. GrpE releases ADP from DnaK; ATP binding to DnaK triggers the release of the substrate protein, thus completing the reaction cycle. Several rounds of ATP-dependent interactions between DnaJ, DnaK and GrpE are required for fully efficient folding. Also involved, together with DnaK and GrpE, in the DNA replication of plasmids through activation of initiation proteins. In Neisseria meningitidis serogroup C (strain 053442), this protein is Chaperone protein DnaJ.